The sequence spans 99 residues: MTEHIEHPQWYLYILRTITGALYTGITTDVSRRLNQHQTGKGAKALRGKGELTLVFHCLAGDRSNALKLEYRIKQLSKNQKERLVQDQPQTLCISDTMY.

Positions 8 to 83 (PQWYLYILRT…KQLSKNQKER (76 aa)) constitute a GIY-YIG domain.

It belongs to the UPF0213 family.

In Pectobacterium carotovorum subsp. carotovorum (strain PC1), this protein is UPF0213 protein PC1_0597.